Here is a 147-residue protein sequence, read N- to C-terminus: Hemoglobin subunit beta-3 (147 aa).

In terms of domain architecture, Globin spans 2 to 147 (EWTDAERTAI…VTSALSRQYH (146 aa)). 2 residues coordinate heme b: His63 and His92.

This sequence belongs to the globin family. Heterotetramer of two alpha chains and two beta chains. As to expression, red blood cells.

Its function is as follows. Involved in oxygen transport from gills to the various peripheral tissues. The protein is Hemoglobin subunit beta-3 (hbb3) of Muraena helena (Mediterranean moray).